The sequence spans 293 residues: MSLYRRLVLLSCLSWPLAGFSATALTNLVAEPFAKLEQDFGGSIGVYAMDTGSGATVSYRAEERFPLCSSFKGFLAAAVLARSQQQAGLLDTPIRYGKNALVPWSPISEKYLTTGMTVAELSAAAVQYSDNAAANLLLKELGGPAGLTAFMRSIGDTTFRLDRWELELNSAIPGDARDTSSPRAVTESLQKLTLGSALAAPQRQQFVDWLKGNTTGNHRIRAAVPADWAVGDKTGTCGVYGTANDYAVVWPTGRAPIVLAVYTRAPNKDDKHSEAVIAAAARLALEGLGVNGQ.

The first 24 residues, Met1–Ala24, serve as a signal peptide directing secretion. Ser69 (acyl-ester intermediate) is an active-site residue. The active-site Proton acceptor is Glu167. Lys233–Gly235 lines the substrate pocket.

The protein belongs to the class-A beta-lactamase family.

It catalyses the reaction a beta-lactam + H2O = a substituted beta-amino acid. Its activity is regulated as follows. Not inhibited by EDTA, inhibited by clavulanic acid and tazobactam. Functionally, hydrolyzes carbapenems, penicillins, cephalosporins and aztreonam with varying efficiency. The sequence is that of Carbapenem-hydrolyzing beta-lactamase KPC (bla) from Klebsiella oxytoca.